Consider the following 172-residue polypeptide: Protein-export protein SecB (172 aa).

It belongs to the SecB family. Homotetramer, a dimer of dimers. One homotetramer interacts with 1 SecA dimer.

The protein resides in the cytoplasm. Its function is as follows. One of the proteins required for the normal export of preproteins out of the cell cytoplasm. It is a molecular chaperone that binds to a subset of precursor proteins, maintaining them in a translocation-competent state. It also specifically binds to its receptor SecA. The sequence is that of Protein-export protein SecB from Cupriavidus pinatubonensis (strain JMP 134 / LMG 1197) (Cupriavidus necator (strain JMP 134)).